A 430-amino-acid polypeptide reads, in one-letter code: Adenylosuccinate synthetase (430 aa).

Residues 13-19 (GDEGKGK) and 41-43 (GHT) contribute to the GTP site. The active-site Proton acceptor is the Asp-14. Residues Asp-14 and Gly-41 each coordinate Mg(2+). IMP contacts are provided by residues 14–17 (DEGK), 39–42 (NAGH), Thr-130, Arg-144, Gln-225, Thr-240, and Arg-304. The active-site Proton donor is His-42. Position 300-306 (300-306 (ATTGRAR)) interacts with substrate. Residues Arg-306, 332 to 334 (KLD), and 414 to 416 (STG) contribute to the GTP site.

It belongs to the adenylosuccinate synthetase family. Homodimer. The cofactor is Mg(2+).

It localises to the cytoplasm. It carries out the reaction IMP + L-aspartate + GTP = N(6)-(1,2-dicarboxyethyl)-AMP + GDP + phosphate + 2 H(+). It participates in purine metabolism; AMP biosynthesis via de novo pathway; AMP from IMP: step 1/2. Functionally, plays an important role in the de novo pathway of purine nucleotide biosynthesis. Catalyzes the first committed step in the biosynthesis of AMP from IMP. This is Adenylosuccinate synthetase from Pseudomonas aeruginosa (strain LESB58).